The chain runs to 254 residues: 5'/3'-nucleotidase SurE (254 aa).

Asp8, Asp9, Ser39, and Asn92 together coordinate a divalent metal cation.

The protein belongs to the SurE nucleotidase family. The cofactor is a divalent metal cation.

Its subcellular location is the cytoplasm. It carries out the reaction a ribonucleoside 5'-phosphate + H2O = a ribonucleoside + phosphate. The catalysed reaction is a ribonucleoside 3'-phosphate + H2O = a ribonucleoside + phosphate. It catalyses the reaction [phosphate](n) + H2O = [phosphate](n-1) + phosphate + H(+). Functionally, nucleotidase with a broad substrate specificity as it can dephosphorylate various ribo- and deoxyribonucleoside 5'-monophosphates and ribonucleoside 3'-monophosphates with highest affinity to 3'-AMP. Also hydrolyzes polyphosphate (exopolyphosphatase activity) with the preference for short-chain-length substrates (P20-25). Might be involved in the regulation of dNTP and NTP pools, and in the turnover of 3'-mononucleotides produced by numerous intracellular RNases (T1, T2, and F) during the degradation of various RNAs. This is 5'/3'-nucleotidase SurE from Edwardsiella ictaluri (strain 93-146).